Reading from the N-terminus, the 109-residue chain is Ferredoxin CarAc (109 aa).

In terms of domain architecture, 2Fe-2S ferredoxin-type spans 3–108 (AKVRVIFRAA…GLTLELPKAQ (106 aa)). Residues Cys43, Cys49, Cys52, and Cys89 each contribute to the [2Fe-2S] cluster site.

Belongs to the adrenodoxin/putidaredoxin family. Monomer. Carbazole 1,9a-dioxygenase complex consists of a terminal oxygenase component CarAa, a ferredoxin reductase component fdr and a ferredoxin component CarAc. [2Fe-2S] cluster serves as cofactor.

Its function is as follows. Part of the multicomponent carbazole 1,9a-dioxygenase (CARDO), that converts carbazole (CAR) into 2-aminobiphenyl-2,3-diol. Acts as a mediator in the electron transfer from fdr to CarAa. This is Ferredoxin CarAc (carAc) from Sphingomonas sp.